The sequence spans 101 residues: MAKKSKIAKNEKRKEIVARYAERRAELKAIIRNPNTSDEDRLDAQFELNSQPRDAAAVRVRNRDSHDGRPRGYLRKFGLSRVRMREMAHRGELPGVRKSSW.

The disordered stretch occupies residues Arg-53–Gly-72. Positions Arg-61 to Pro-70 are enriched in basic and acidic residues.

It belongs to the universal ribosomal protein uS14 family. In terms of assembly, part of the 30S ribosomal subunit. Contacts proteins S3 and S10.

In terms of biological role, binds 16S rRNA, required for the assembly of 30S particles and may also be responsible for determining the conformation of the 16S rRNA at the A site. This Corynebacterium glutamicum (strain R) protein is Small ribosomal subunit protein uS14.